The following is a 354-amino-acid chain: tRNA N6-adenosine threonylcarbamoyltransferase (354 aa).

2 residues coordinate Fe cation: His-111 and His-115. Residues 134–138 (LVSGG), Asp-167, Gly-180, and Asn-279 each bind substrate. Asp-319 contributes to the Fe cation binding site.

The protein belongs to the KAE1 / TsaD family. Fe(2+) is required as a cofactor.

It localises to the cytoplasm. The catalysed reaction is L-threonylcarbamoyladenylate + adenosine(37) in tRNA = N(6)-L-threonylcarbamoyladenosine(37) in tRNA + AMP + H(+). In terms of biological role, required for the formation of a threonylcarbamoyl group on adenosine at position 37 (t(6)A37) in tRNAs that read codons beginning with adenine. Is involved in the transfer of the threonylcarbamoyl moiety of threonylcarbamoyl-AMP (TC-AMP) to the N6 group of A37, together with TsaE and TsaB. TsaD likely plays a direct catalytic role in this reaction. This chain is tRNA N6-adenosine threonylcarbamoyltransferase, found in Neisseria meningitidis serogroup C / serotype 2a (strain ATCC 700532 / DSM 15464 / FAM18).